A 620-amino-acid polypeptide reads, in one-letter code: MDSHTLIQALIYLGSAALIVPIAVRLGLGSVLGYLIAGCIIGPWGLRLVTDAESILHFAEIGVVLMLFIIGLELDPQRLWKLRAAVFGGGALQMVICGGLLGLFCMLLGLRWQVAELIGMTLALSSTAIAMQAMNERNLMVTQMGRSAFAVLLFQDIAAIPLVAMIPLLATSSASTTMGAFALSALKVAGALVLVVLLGRYVTRPALRFVARSGLREVFSAVALFLVFGFGLLLEEVGLSMAMGAFLAGVLLASSEYRHALESDIEPFKGLLLGLFFIGVGMSIDFGTLLENPLRIVILLLGFLIIKIAMLWLIARPLQVPNKQRRWFAVLLGQGSEFAFVVFGAAQMANVLEPEWAKSLTLAVALSMAATPILLVILNRLEQSSTEEAREADEIDEEQPRVIIAGFGRFGQITGRLLLSSGVKMVVLDHDPDHIETLRKFGMKVFYGDATRMDLLESAGAAKAEVLINAIDDPQTNLQLTEMVKEHFPHLQIIARARDVDHYIRLRQAGVEKPERETFEGALKTGRLALESLGLGPYEARERADVFRRFNIQMVEEMAMVENDTKARAAVYKRTSAMLSEIITEDREHLSLIQRHGWQGTEEGKHTGNMADEPETKPSS.

The next 12 helical transmembrane spans lie at 4–24 (HTLIQALIYLGSAALIVPIAV), 26–46 (LGLGSVLGYLIAGCIIGPWGL), 54–74 (SILHFAEIGVVLMLFIIGLEL), 90–110 (GALQMVICGGLLGLFCMLLGL), 114–134 (VAELIGMTLALSSTAIAMQAM), 149–169 (FAVLLFQDIAAIPLVAMIPLL), 178–198 (MGAFALSALKVAGALVLVVLL), 218–238 (VFSAVALFLVFGFGLLLEEVG), 270–290 (GLLLGLFFIGVGMSIDFGTLL), 294–314 (LRIVILLLGFLIIKIAMLWLI), 327–347 (WFAVLLGQGSEFAFVVFGAAQ), and 359–379 (SLTLAVALSMAATPILLVILN). Residues 399–518 (QPRVIIAGFG…AGVEKPERET (120 aa)) enclose the RCK N-terminal domain. Residues 597 to 620 (GWQGTEEGKHTGNMADEPETKPSS) are disordered.

The protein belongs to the monovalent cation:proton antiporter 2 (CPA2) transporter (TC 2.A.37) family. KefC subfamily. Homodimer. Interacts with the regulatory subunit KefF.

The protein localises to the cell inner membrane. Pore-forming subunit of a potassium efflux system that confers protection against electrophiles. Catalyzes K(+)/H(+) antiport. The chain is Glutathione-regulated potassium-efflux system protein KefC from Escherichia coli O8 (strain IAI1).